We begin with the raw amino-acid sequence, 376 residues long: Succinyl-diaminopimelate desuccinylase (376 aa).

His67 provides a ligand contact to Zn(2+). Asp69 is an active-site residue. Position 100 (Asp100) interacts with Zn(2+). Glu134 (proton acceptor) is an active-site residue. Zn(2+) is bound by residues Glu135, Glu163, and His349.

Belongs to the peptidase M20A family. DapE subfamily. In terms of assembly, homodimer. Zn(2+) is required as a cofactor. It depends on Co(2+) as a cofactor.

It catalyses the reaction N-succinyl-(2S,6S)-2,6-diaminopimelate + H2O = (2S,6S)-2,6-diaminopimelate + succinate. The protein operates within amino-acid biosynthesis; L-lysine biosynthesis via DAP pathway; LL-2,6-diaminopimelate from (S)-tetrahydrodipicolinate (succinylase route): step 3/3. Functionally, catalyzes the hydrolysis of N-succinyl-L,L-diaminopimelic acid (SDAP), forming succinate and LL-2,6-diaminopimelate (DAP), an intermediate involved in the bacterial biosynthesis of lysine and meso-diaminopimelic acid, an essential component of bacterial cell walls. The sequence is that of Succinyl-diaminopimelate desuccinylase from Idiomarina loihiensis (strain ATCC BAA-735 / DSM 15497 / L2-TR).